A 409-amino-acid polypeptide reads, in one-letter code: Astacin-like metalloendopeptidase (409 aa).

The N-terminal stretch at 1–19 is a signal peptide; that stretch reads MDLKMLLIFTAFLLPAVLG. Residues 20-86 constitute a propeptide that is removed on maturation; the sequence is FPIQDNYENS…EGDIVPRRSR (67 aa). The segment covering 30-42 has biased composition (low complexity); it reads TATSESTQVTTEE. The segment at 30–55 is disordered; sequence TATSESTQVTTEESIYDSPSPTETDS. Positions 87-285 constitute a Peptidase M12A domain; it reads SAFNCRNCYW…AKINKLYNCS (199 aa). Cystine bridges form between Cys91–Cys94, Cys134–Cys284, Cys155–Cys175, Cys287–Cys313, and Cys339–Cys362. Zn(2+) is bound at residue His183. Glu184 is an active-site residue. The Zn(2+) site is built by His187 and His193. The 113-residue stretch at 287–399 folds into the CUB domain; that stretch reads CSTIIDAAFG…SGFQATFTSA (113 aa).

Requires Zn(2+) as cofactor.

It is found in the cytoplasm. Its subcellular location is the cell membrane. The protein localises to the cytoplasmic vesicle. The protein resides in the secretory vesicle. It localises to the cortical granule. Its function is as follows. Probable oocyte-specific oolemmal receptor involved in sperm and egg adhesion and fertilization. Protease which may play a role in the breaking down of the vitelline membrane (days 0-5) and possibly, in the digestion of the egg white (days 9-12). In Coturnix japonica (Japanese quail), this protein is Astacin-like metalloendopeptidase.